Here is a 153-residue protein sequence, read N- to C-terminus: Small ribosomal subunit protein uS5c (153 aa).

One can recognise an S5 DRBM domain in the interval 11–74 (WQERVIQIRR…VDAKKQLINI (64 aa)).

It belongs to the universal ribosomal protein uS5 family. In terms of assembly, part of the 30S ribosomal subunit. Contacts protein S4.

Its subcellular location is the plastid. The protein localises to the chloroplast. Functionally, with S4 and S12 plays an important role in translational accuracy. The chain is Small ribosomal subunit protein uS5c (rps5) from Cyanidioschyzon merolae (strain NIES-3377 / 10D) (Unicellular red alga).